The sequence spans 451 residues: FAD-dependent monooxygenase adrH (451 aa).

FAD-binding residues include Glu39, Gly53, and Arg112. The active site involves Tyr196. Residues Asp288 and Ala301 each coordinate FAD. The N-linked (GlcNAc...) asparagine glycan is linked to Asn385. A helical transmembrane segment spans residues 426–446; that stretch reads TLLWVSSLALFLFFPWLGSYL.

It belongs to the paxM FAD-dependent monooxygenase family. The cofactor is FAD.

It localises to the membrane. Its pathway is secondary metabolite biosynthesis; terpenoid biosynthesis. Its function is as follows. FAD-dependent monooxygenase; part of the gene cluster that mediates the biosynthesis of andrastins, meroterpenoid compounds that exhibit inhibitory activity against ras farnesyltransferase, suggesting that they could be promising leads for antitumor agents. The first step of the pathway is the synthesis of 3,5-dimethylorsellinic acid (DMOA) by the polyketide synthase adrD via condensation of one acetyl-CoA starter unit with 3 malonyl-CoA units and 2 methylations. DMAO is then converted to farnesyl-DMAO by the prenyltransferase adrG. The methyltransferase adrK catalyzes the methylation of the carboxyl group of farnesyl-DMAO to farnesyl-DMAO methyl ester which is further converted to epoxyfarnesyl-DMAO methyl ester by the FAD-dependent monooxygenase adrH. The terpene cyclase adrI then catalyzes the carbon skeletal rearrangement to generate the andrastin E, the first compound in the pathway having the andrastin scaffold, with the tetracyclic ring system. The post-cyclization tailoring enzymes adrF, adrE, adrJ, and adrA, are involved in the conversion of andrastin E into andrastin A. The short chain dehydrogenase adrF is responsible for the oxidation of the C-3 a hydroxyl group of andrastin E to yield the corresponding ketone, andrastin D. The ketoreductase adrE stereoselectively reduces the carbonyl moiety to reverse the stereochemistry of the C-3 position to yield andrastin F. The acetyltransferase adrJ is the acetyltransferase that attaches the acetyl group to the C-3 hydroxyl group of andrastin F to yield andrastin C. Finally, the cytochrome P450 monooxygenase adrA catalyzes two sequential oxidation reactions of the C-23 methyl group, to generate the corresponding alcohol andrastin B, and aldehyde andrastin A. The chain is FAD-dependent monooxygenase adrH from Penicillium rubens (strain ATCC 28089 / DSM 1075 / NRRL 1951 / Wisconsin 54-1255) (Penicillium chrysogenum).